The sequence spans 225 residues: NAD(P)H-quinone oxidoreductase subunit K, chloroplastic (225 aa).

4 residues coordinate [4Fe-4S] cluster: Cys43, Cys44, Cys108, and Cys139.

This sequence belongs to the complex I 20 kDa subunit family. As to quaternary structure, NDH is composed of at least 16 different subunits, 5 of which are encoded in the nucleus. [4Fe-4S] cluster is required as a cofactor.

It localises to the plastid. The protein localises to the chloroplast thylakoid membrane. It catalyses the reaction a plastoquinone + NADH + (n+1) H(+)(in) = a plastoquinol + NAD(+) + n H(+)(out). The enzyme catalyses a plastoquinone + NADPH + (n+1) H(+)(in) = a plastoquinol + NADP(+) + n H(+)(out). In terms of biological role, NDH shuttles electrons from NAD(P)H:plastoquinone, via FMN and iron-sulfur (Fe-S) centers, to quinones in the photosynthetic chain and possibly in a chloroplast respiratory chain. The immediate electron acceptor for the enzyme in this species is believed to be plastoquinone. Couples the redox reaction to proton translocation, and thus conserves the redox energy in a proton gradient. This chain is NAD(P)H-quinone oxidoreductase subunit K, chloroplastic, found in Oenothera argillicola (Appalachian evening primrose).